Here is a 178-residue protein sequence, read N- to C-terminus: Deoxyuridine 5'-triphosphate nucleotidohydrolase (178 aa).

This sequence belongs to the dUTPase family. The cofactor is Mg(2+).

It carries out the reaction dUTP + H2O = dUMP + diphosphate + H(+). The protein operates within pyrimidine metabolism; dUMP biosynthesis; dUMP from dCTP (dUTP route): step 2/2. In terms of biological role, this enzyme is involved in nucleotide metabolism: it produces dUMP, the immediate precursor of thymidine nucleotides and it decreases the intracellular concentration of dUTP so that uracil cannot be incorporated into DNA. This Fowl adenovirus A serotype 1 (strain CELO / Phelps) (FAdV-1) protein is Deoxyuridine 5'-triphosphate nucleotidohydrolase.